We begin with the raw amino-acid sequence, 476 residues long: 8-amino-7-oxononanoate synthase (476 aa).

Arg-24 provides a ligand contact to substrate. Position 171–172 (171–172 (GF)) interacts with pyridoxal 5'-phosphate. His-210 serves as a coordination point for substrate. Pyridoxal 5'-phosphate is bound by residues Ser-260, 285–288 (DDAH), and 316–319 (TLSK). At Lys-319 the chain carries N6-(pyridoxal phosphate)lysine. Thr-427 serves as a coordination point for substrate. The Peroxisomal targeting signal PTS1 signature appears at 474-476 (PKL).

It belongs to the class-II pyridoxal-phosphate-dependent aminotransferase family. BioF subfamily. Monomer. Pyridoxal 5'-phosphate serves as cofactor.

The protein resides in the cytoplasm. Its subcellular location is the cytosol. It localises to the peroxisome. It catalyses the reaction 6-carboxyhexanoyl-[ACP] + L-alanine + H(+) = (8S)-8-amino-7-oxononanoate + holo-[ACP] + CO2. It participates in cofactor biosynthesis; biotin biosynthesis; 8-amino-7-oxononanoate from pimeloyl-CoA: step 1/1. Catalyzes the decarboxylative condensation of pimeloyl-[acyl-carrier protein] and L-alanine to produce 8-amino-7-oxononanoate (AON), [acyl-carrier protein], and carbon dioxide. Required for the biosynthesis of D-biotin that prevents light-mediated cell death and modulates defense gene expression, probably by avoiding hydrogen peroxide H(2)O(2) accumulation. This Arabidopsis thaliana (Mouse-ear cress) protein is 8-amino-7-oxononanoate synthase.